Reading from the N-terminus, the 69-residue chain is Putative membrane protein insertion efficiency factor (69 aa).

It belongs to the UPF0161 family.

It localises to the cell inner membrane. Its function is as follows. Could be involved in insertion of integral membrane proteins into the membrane. This is Putative membrane protein insertion efficiency factor from Geobacter metallireducens (strain ATCC 53774 / DSM 7210 / GS-15).